The chain runs to 127 residues: Single-stranded DNA-binding protein 2 (127 aa).

In terms of domain architecture, SSB spans 4-103 (INKVMLVGRC…ITINTIELLG (100 aa)). The tract at residues 104–127 (SPRKEESTSTSAPNETQAVANANF) is disordered. The segment covering 111–127 (TSTSAPNETQAVANANF) has biased composition (polar residues).

In terms of assembly, homotetramer.

The chain is Single-stranded DNA-binding protein 2 (ssb2) from Nostoc sp. (strain PCC 7120 / SAG 25.82 / UTEX 2576).